Reading from the N-terminus, the 253-residue chain is MDYXNFGNSASKKFQDDTLNRVRKEHEEALKKLREENFSSNTSELGNKKHYRAQERMSSPLHRLSPTGKSDDRKVKSPLDDKLRRQLREGNTRLPPPPFSSYGMPPTNRSNLDRIRRRTSSPVRTDKFASQNVIDDQRLEIKYLERIVYDQGTVIDNLTSRITRLESFILNSISDRGDKNFASLEHSRSFSGFPTNKTYGLQMGGLYENDMPYRRSSDNINKEGAREDRSSQIHIENESTEDILKILSSSFHN.

The span at 1–12 (MDYXNFGNSASK) shows a compositional bias: polar residues. Disordered regions lie at residues 1 to 20 (MDYX…DTLN), 31 to 123 (KKLR…SSPV), and 210 to 231 (DMPY…DRSS). A Phosphothreonine modification is found at threonine 18. Phosphoserine is present on serine 65. 2 stretches are compositionally biased toward basic and acidic residues: residues 69–91 (KSDD…REGN) and 211–231 (MPYR…DRSS). The residue at position 240 (threonine 240) is a Phosphothreonine; by MPS1.

This sequence belongs to the SPC29 family. Component of the SPC110 complex containing at least CMD1, SPC29, SPC42 and SCP110. Interacts with BBP1. MPS1-mediated phosphorylation at Thr-240 is required for spindle pole body duplication.

The protein localises to the nucleus. Its subcellular location is the cytoplasm. It localises to the cytoskeleton. The protein resides in the microtubule organizing center. It is found in the spindle pole body. Component of the spindle pole body (SPB) required for the proper execution of spindle pole body (SPB) duplication. Links the central plaque component SPC42 to the inner plaque component SPC110. The protein is Spindle pole component 29 (SPC29) of Saccharomyces cerevisiae (strain Zymaflore VL3) (Baker's yeast).